Consider the following 206-residue polypeptide: Ribonuclease HII (206 aa).

Positions 19-206 constitute an RNase H type-2 domain; sequence ALIAGVDEVG…GPVKRALGIE (188 aa). A divalent metal cation is bound by residues Asp-25, Glu-26, and Asp-117.

Belongs to the RNase HII family. It depends on Mn(2+) as a cofactor. Requires Mg(2+) as cofactor.

The protein localises to the cytoplasm. The catalysed reaction is Endonucleolytic cleavage to 5'-phosphomonoester.. In terms of biological role, endonuclease that specifically degrades the RNA of RNA-DNA hybrids. In Vibrio cholerae serotype O1 (strain M66-2), this protein is Ribonuclease HII.